A 121-amino-acid chain; its full sequence is Putative iron-sulfur cluster insertion protein ErpA (121 aa).

Positions 49, 113, and 115 each coordinate iron-sulfur cluster.

The protein belongs to the HesB/IscA family. Homodimer. Requires iron-sulfur cluster as cofactor.

In terms of biological role, required for insertion of 4Fe-4S clusters. The protein is Putative iron-sulfur cluster insertion protein ErpA of Nitrosomonas eutropha (strain DSM 101675 / C91 / Nm57).